Consider the following 339-residue polypeptide: Uroporphyrinogen decarboxylase (339 aa).

Residues 21–25 (RQAGR), D71, Y146, S201, and H316 each bind substrate.

It belongs to the uroporphyrinogen decarboxylase family. In terms of assembly, homodimer.

It is found in the cytoplasm. It catalyses the reaction uroporphyrinogen III + 4 H(+) = coproporphyrinogen III + 4 CO2. It participates in porphyrin-containing compound metabolism; protoporphyrin-IX biosynthesis; coproporphyrinogen-III from 5-aminolevulinate: step 4/4. Its function is as follows. Catalyzes the decarboxylation of four acetate groups of uroporphyrinogen-III to yield coproporphyrinogen-III. The chain is Uroporphyrinogen decarboxylase from Rickettsia canadensis (strain McKiel).